A 263-amino-acid polypeptide reads, in one-letter code: uncharacterized protein (263 aa).

The Response regulatory domain occupies 6–121 (TAIIADDEPL…RLQTTCERVK (116 aa)). The residue at position 58 (aspartate 58) is a 4-aspartylphosphate. Residues 158–263 (IKATQGDDIH…RASQSLFKGM (106 aa)) enclose the HTH LytTR-type domain.

This is an uncharacterized protein from Vibrio parahaemolyticus serotype O3:K6 (strain RIMD 2210633).